We begin with the raw amino-acid sequence, 502 residues long: 4,4'-diapophytoene desaturase (4,4'-diaponeurosporene-forming) (502 aa).

Val-5 to Ala-17 lines the FAD pocket.

Belongs to the carotenoid/retinoid oxidoreductase family. CrtN subfamily.

The enzyme catalyses 15-cis-4,4'-diapophytoene + 3 FAD + 3 H(+) = all-trans-4,4'-diaponeurosporene + 3 FADH2. It functions in the pathway carotenoid biosynthesis; staphyloxanthin biosynthesis; staphyloxanthin from farnesyl diphosphate: step 2/5. Its function is as follows. Involved in the biosynthesis of the yellow-orange carotenoid staphyloxanthin, which plays a role in the virulence via its protective function against oxidative stress. Catalyzes three successive dehydrogenation reactions that lead to the introduction of three double bonds into 4,4'-diapophytoene (dehydrosqualene), with 4,4'-diapophytofluene and 4,4'-diapo-zeta-carotene as intermediates, and 4,4'-diaponeurosporene (the major deep-yellow pigment in staphylococci strains) as the end product. The polypeptide is 4,4'-diapophytoene desaturase (4,4'-diaponeurosporene-forming) (Staphylococcus aureus (strain USA300)).